Here is a 377-residue protein sequence, read N- to C-terminus: Nitric oxide reductase FlRd-NAD(+) reductase (377 aa).

It belongs to the FAD-dependent oxidoreductase family. Requires FAD as cofactor.

It is found in the cytoplasm. The catalysed reaction is 2 reduced [nitric oxide reductase rubredoxin domain] + NAD(+) + H(+) = 2 oxidized [nitric oxide reductase rubredoxin domain] + NADH. Its pathway is nitrogen metabolism; nitric oxide reduction. In terms of biological role, one of at least two accessory proteins for anaerobic nitric oxide (NO) reductase. Reduces the rubredoxin moiety of NO reductase. The protein is Nitric oxide reductase FlRd-NAD(+) reductase of Salmonella typhimurium (strain LT2 / SGSC1412 / ATCC 700720).